The primary structure comprises 109 residues: Immunity protein CdiI (109 aa).

Specifically interacts with cognate toxin CdiA, which inhibits the toxin.

Its function is as follows. Immunity protein component of a toxin-immunity protein module, which functions as a cellular contact-dependent growth inhibition (CDI) system. CDI modules allow bacteria to communicate with and inhibit the growth of closely related neighboring bacteria in a contact-dependent fashion. Neutralizes the toxic activity of cognate toxin CdiA (C-terminal 160 residue CT fragment) upon expression in E.coli. Does not inhibit toxic activity of CdiA from other strains of B.pseudomallei. In Burkholderia pseudomallei (Pseudomonas pseudomallei), this protein is Immunity protein CdiI (cdiI).